The sequence spans 1286 residues: MRRKGTKPSTACHQEEGPPPSQDGAHSDEEMEQPAGEAESAAPAKPPGEELDNRSLEEILNSIPPPPPPAMASEAGAPRLMITHIVNQNFKSYAGEKVLGPFHKRFSCIIGPNGSGKSNVIDSMLFVFGYRAQKIRSKKLSVLIHNSDEHKDIQSCTVEVHFQKIIDKEGDDYEVLPNSNFYVSRTAYRDSTSVYHISGKKKTFKDVGNLLRSHGIDLDHNRFLILQGEVEQIAMMKPKGQTEHDEGMLEYLEDIIGCGRLNEPIKVLCRRVEILNEHRGEKLNRVKMVEKEKDALEGEKNIAIEFLTLENEMFKKKNHICQYYIYDLQNRIAEITTQKEKIHEDTKEITEKSNVLSNEMKAKNSAVKDVEKKLNKVTKFIEQNKEKFTQLDLEDVQVREKLKHATSKAKKLEKQLQKDKEKVEELKSVPAKSKTVINETTTRNNSLEKEREKEEKKLKEVMDSLKQETQGLQKEKEIQEKELMGFNKSVNEARSKMEVAQSELDIYLSRHNTAVSQLSKAKEALITASETLKERKAAIKDINTKLPQTQQELKEKEKELQKLTQEEINLKSLVHDLFQKVEEAKSSLAMNRSRGKVLDAIIQEKKSGRIPGIYGRLGDLGAIDEKYDIAISSCCHALDYIVVDSIDTAQECVNFLKKHNIGIATFIGLDKMTVWAKKMSKIQTPENTPRLFDLVKVKNEEIRQAFYFALRDTLVANNLDQATRVAYQRDRRWRVVTLQGQIIEQSGTMSGGGSKVMRGRMGSSVIDEISVEEVNKMESQLERHSKQAMQIQEQKVQHEEAVVKLRHSERDMRNTLEKFAASIQGLSEQEEYLCVQIKELEANVLTTAPDRKQQKLLEENVSVFKKEYDAVAEKAGKVEAEIKRLHNTIIDINNRKLKAQQNKLDTINKQLDECASAITKAQVAIKTADRNLKKAQDSVCRTEKEIKDTEKEINDLKTELKNIEDKAEEVINNTKTAETSLPEIQKEHRNLLQELKVIQENEHALQKDALSIKLKLEQIDGHISEHNSKIKYWQKEISKIKLHPVEDNPVETVAVLSQEELEAIKNPESITNEIALLEAQCREMKPNLGAIAEYKKKEDLYLQRVAELDKITSERDNFRQAYEDLRKQRLNEFMAGFYVITNKLKENYQMLTLGGDAELELVDSLDPFSEGIMFSVRPPKKSWKKIFNLSGGEKTLSSLALVFALHHYKPTPLYFMDEIDAALDFKNVSIVAFYIYEQTKNAQFIIISLRNNMFEISDRLIGIYKTYNSTKSVAVNPKQIASKGLC.

Residues 1-51 (MRRKGTKPSTACHQEEGPPPSQDGAHSDEEMEQPAGEAESAAPAKPPGEEL) form a disordered region. Residues Ser-21, Ser-27, and Ser-40 each carry the phosphoserine modification. 111–118 (GPNGSGKS) serves as a coordination point for ATP. The residue at position 141 (Ser-141) is a Phosphoserine. Positions 270–589 (RRVEILNEHR…KVEEAKSSLA (320 aa)) form a coiled coil. Residues Lys-379 and Lys-677 each carry the N6-acetyllysine modification. An SMC hinge domain is found at 611-725 (PGIYGRLGDL…ANNLDQATRV (115 aa)). Coiled-coil stretches lie at residues 768-1018 (EISV…KLEQ) and 1068-1133 (ESIT…LNEF). Phosphoserine is present on Ser-980.

Belongs to the SMC family. SMC4 subfamily. Forms a heterodimer with SMC2. Component of the condensin complex, which contains the SMC2 and SMC4 heterodimer, and three non SMC subunits that probably regulate the complex: BRRN1/CAPH, CNAP1/CAPD2 and CAPG.

It is found in the nucleus. The protein resides in the cytoplasm. Its subcellular location is the chromosome. Its function is as follows. Central component of the condensin complex, a complex required for conversion of interphase chromatin into mitotic-like condense chromosomes. The condensin complex probably introduces positive supercoils into relaxed DNA in the presence of type I topoisomerases and converts nicked DNA into positive knotted forms in the presence of type II topoisomerases. The protein is Structural maintenance of chromosomes protein 4 (Smc4) of Mus musculus (Mouse).